A 916-amino-acid polypeptide reads, in one-letter code: Pertactin autotransporter (916 aa).

The first 37 residues, 1-37 (MNMSLSRIVKAAPLRRTTLAMALGALGALGAAPAAHA), serve as a signal peptide directing secretion. Positions 263–265 (RGD) match the Cell attachment site; involved in adhesion to various eukaryotic cell lines motif. 3 tandem repeats follow at residues 269-273 (GGAVP), 274-278 (GGAVP), and 279-283 (GGAVP). The segment at 269–288 (GGAVPGGAVPGGAVPGGFGP) is 4 X 5 AA tandem repeats of G-G-A-V-P. Residues 284–288 (GGFGP) form a 4; approximate repeat. The disordered stretch occupies residues 564-613 (SLVGAKAPPAPKPAPQPGPQPGPQPPQPPQPPQRQPEAPAPQPPAGRELS). Pro residues predominate over residues 571 to 607 (PPAPKPAPQPGPQPGPQPPQPPQPPQRQPEAPAPQPP). The interval 578 to 606 (PQPGPQPGPQPPQPPQPPQRQPEAPAPQP) is 6 X 3 AA repeats of P-Q-P. The Autotransporter domain occupies 648 to 916 (LNPDAGGAWG…TFHAGYRYSW (269 aa)). The Cell attachment site signature appears at 706–708 (RGD).

As to quaternary structure, monomer.

Its subcellular location is the periplasm. It is found in the secreted. The protein localises to the cell surface. It localises to the cell outer membrane. In terms of biological role, agglutinogen that binds to eukaryotic cells; a process mediated by the R-G-D sequence. Pertactin may have a role in bacterial adhesion, and thus play a role in virulence. May contribute to the disease state of whooping cough. The protein is Pertactin autotransporter (prn) of Bordetella bronchiseptica (strain ATCC BAA-588 / NCTC 13252 / RB50) (Alcaligenes bronchisepticus).